We begin with the raw amino-acid sequence, 638 residues long: Protein NSP-INTERACTING KINASE 1 (638 aa).

Positions methionine 1–glycine 31 are cleaved as a signal peptide. At leucine 32–alanine 248 the chain is on the extracellular side. 2 N-linked (GlcNAc...) asparagine glycosylation sites follow: asparagine 92 and asparagine 103. 4 LRR repeats span residues leucine 104–leucine 128, arginine 130–leucine 152, glutamine 153–asparagine 175, and threonine 177–threonine 200. Residues asparagine 162, asparagine 175, asparagine 188, asparagine 219, and asparagine 231 are each glycosylated (N-linked (GlcNAc...) asparagine). Residues isoleucine 249 to leucine 269 traverse the membrane as a helical segment. The Cytoplasmic segment spans residues tryptophan 270–arginine 638. The residue at position 309 (threonine 309) is a Phosphothreonine. The 282-residue stretch at phenylalanine 312–glutamate 593 folds into the Protein kinase domain. Leucine 318–valine 326 is a binding site for ATP. Position 335 is a phosphothreonine (threonine 335). Lysine 340 contributes to the ATP binding site. A phosphoserine mark is found at serine 393 and serine 396. Positions tyrosine 422–leucine 502 are interaction with geminivirus NSP protein. Catalysis depends on aspartate 435, which acts as the Proton acceptor. 3 positions are modified to phosphothreonine: threonine 468, threonine 469, and threonine 474. Tyrosine 482 is modified (phosphotyrosine). Phosphoserine is present on serine 484. Phosphothreonine is present on threonine 485. Serine 489 carries the post-translational modification Phosphoserine. Threonine 566 carries the post-translational modification Phosphothreonine.

It belongs to the protein kinase superfamily. Ser/Thr protein kinase family. Oligomer. Interacts with geminivirus nuclear shuttle protein (NSP). Interacts with RPL10A and RPL18B. Post-translationally, autophosphorylated. Expressed in seedlings, leaves, roots, stems and flowers.

It is found in the cell membrane. The catalysed reaction is L-seryl-[protein] + ATP = O-phospho-L-seryl-[protein] + ADP + H(+). It catalyses the reaction L-threonyl-[protein] + ATP = O-phospho-L-threonyl-[protein] + ADP + H(+). Inhibited by the viral nuclear shuttle protein (NSP) that binds to the region required for oligomerization. Its function is as follows. Involved in defense response to geminivirus and begomovirus infection via regulation of the nuclear trafficking of RPL10A. Phosphorylates RPL10A in vitro. Activation of NIK1 down-regulates cytosolic translation. In Arabidopsis thaliana (Mouse-ear cress), this protein is Protein NSP-INTERACTING KINASE 1.